The sequence spans 431 residues: Phosphoribosylamine--glycine ligase (431 aa).

Residues 108 to 315 (KDFLARHEIP…LVLLVEAAFA (208 aa)) form the ATP-grasp domain. 134 to 195 (LQEKGAPIVI…EEFLDGEEAS (62 aa)) serves as a coordination point for ATP. Glu285 and Asn287 together coordinate Mg(2+).

Belongs to the GARS family. Requires Mg(2+) as cofactor. Mn(2+) serves as cofactor.

The enzyme catalyses 5-phospho-beta-D-ribosylamine + glycine + ATP = N(1)-(5-phospho-beta-D-ribosyl)glycinamide + ADP + phosphate + H(+). It functions in the pathway purine metabolism; IMP biosynthesis via de novo pathway; N(1)-(5-phospho-D-ribosyl)glycinamide from 5-phospho-alpha-D-ribose 1-diphosphate: step 2/2. The polypeptide is Phosphoribosylamine--glycine ligase (Pseudomonas putida (strain ATCC 47054 / DSM 6125 / CFBP 8728 / NCIMB 11950 / KT2440)).